A 373-amino-acid chain; its full sequence is Phosphoserine aminotransferase (373 aa).

Residue arginine 47 participates in L-glutamate binding. Residues 81-82 (AR), tryptophan 113, threonine 164, aspartate 185, and glutamine 208 contribute to the pyridoxal 5'-phosphate site. The residue at position 209 (lysine 209) is an N6-(pyridoxal phosphate)lysine. 250–251 (NT) contacts pyridoxal 5'-phosphate.

The protein belongs to the class-V pyridoxal-phosphate-dependent aminotransferase family. SerC subfamily. Homodimer. The cofactor is pyridoxal 5'-phosphate.

The protein localises to the cytoplasm. It catalyses the reaction O-phospho-L-serine + 2-oxoglutarate = 3-phosphooxypyruvate + L-glutamate. The catalysed reaction is 4-(phosphooxy)-L-threonine + 2-oxoglutarate = (R)-3-hydroxy-2-oxo-4-phosphooxybutanoate + L-glutamate. It functions in the pathway amino-acid biosynthesis; L-serine biosynthesis; L-serine from 3-phospho-D-glycerate: step 2/3. The protein operates within cofactor biosynthesis; pyridoxine 5'-phosphate biosynthesis; pyridoxine 5'-phosphate from D-erythrose 4-phosphate: step 3/5. Functionally, catalyzes the reversible conversion of 3-phosphohydroxypyruvate to phosphoserine and of 3-hydroxy-2-oxo-4-phosphonooxybutanoate to phosphohydroxythreonine. In Buchnera aphidicola subsp. Baizongia pistaciae (strain Bp), this protein is Phosphoserine aminotransferase.